A 204-amino-acid polypeptide reads, in one-letter code: Holliday junction branch migration complex subunit RuvA (204 aa).

The segment at 1 to 64 is domain I; the sequence is MISRMKGIIL…EDAQLLYGFH (64 aa). The tract at residues 65–143 is domain II; that stretch reads HPKERAMFSE…NLNKNLFKST (79 aa). Positions 144 to 155 are flexible linker; sequence ADHMLSSVSTDL. Positions 156–204 are domain III; the sequence is SAKSAEAEAISALISLGYKPQEAAQLIKNIAQPDLDSQALIKHALRSTL.

The protein belongs to the RuvA family. In terms of assembly, homotetramer. Forms an RuvA(8)-RuvB(12)-Holliday junction (HJ) complex. HJ DNA is sandwiched between 2 RuvA tetramers; dsDNA enters through RuvA and exits via RuvB. An RuvB hexamer assembles on each DNA strand where it exits the tetramer. Each RuvB hexamer is contacted by two RuvA subunits (via domain III) on 2 adjacent RuvB subunits; this complex drives branch migration. In the full resolvosome a probable DNA-RuvA(4)-RuvB(12)-RuvC(2) complex forms which resolves the HJ.

The protein resides in the cytoplasm. Functionally, the RuvA-RuvB-RuvC complex processes Holliday junction (HJ) DNA during genetic recombination and DNA repair, while the RuvA-RuvB complex plays an important role in the rescue of blocked DNA replication forks via replication fork reversal (RFR). RuvA specifically binds to HJ cruciform DNA, conferring on it an open structure. The RuvB hexamer acts as an ATP-dependent pump, pulling dsDNA into and through the RuvAB complex. HJ branch migration allows RuvC to scan DNA until it finds its consensus sequence, where it cleaves and resolves the cruciform DNA. This Hamiltonella defensa subsp. Acyrthosiphon pisum (strain 5AT) protein is Holliday junction branch migration complex subunit RuvA.